Here is an 891-residue protein sequence, read N- to C-terminus: Dynein axonemal intermediate chain 3 (891 aa).

Over residues 1 to 17 (MAPKQKKKTSRGKKRLK) the composition is skewed to basic residues. A disordered region spans residues 1-22 (MAPKQKKKTSRGKKRLKPVLAA). WD repeat units follow at residues 395-435 (ESPD…DRIE), 477-533 (GHKK…PLTP), 670-709 (IHDG…GPLL), and 713-753 (CAPK…HEPA). Residues 818–861 (LEYVEQRKKIREQEKKEMELEMAKKKVKTYQKSKEQMQAELKMD) adopt a coiled-coil conformation.

Interacts with ACTR2; this interaction reduces binding of the Arp2/3 complex to the VCA domain of nucleation promoting factors. Part of the multisubunit axonemal dynein complex formed at least of two heavy chains and a number of intermediate and light chains. Found in a associated with the catalytic heavy chain DNAH2, the intermediate chain DNAI4, and the light chain DYNLT1.

The protein localises to the cytoplasm. Acts as a negative regulator of cell migration, invasion, and metastasis downstream of p53/TP53, through inhibition of Arp2/3 complex-mediated actin polymerization. Via its association with the multisubunit axonemal dynein complex, is potentially involved in the regulation of cilia function. May play a role in osteogenesis of dental tissue-derived mesenchymal stem cells. This chain is Dynein axonemal intermediate chain 3, found in Homo sapiens (Human).